The primary structure comprises 238 residues: EKC/KEOPS complex subunit SPAP27G11.07c (238 aa).

The Protein kinase domain maps to 20–238 (EKKLTVVKQG…MRGRKRTMIG (219 aa)). Residues 26 to 34 (VKQGAEAIT) and Lys-48 contribute to the ATP site. Asp-148 acts as the Proton acceptor in catalysis.

Belongs to the protein kinase superfamily. BUD32 family. As to quaternary structure, component of the EKC/KEOPS complex composed of at least SPAP27G11.07c/BUD32, cgi121, gon7, pgp2 and SPAC4H3.13/PCC1; the whole complex dimerizes.

It is found in the cytoplasm. Its subcellular location is the nucleus. The protein resides in the chromosome. The protein localises to the telomere. The catalysed reaction is L-seryl-[protein] + ATP = O-phospho-L-seryl-[protein] + ADP + H(+). It catalyses the reaction L-threonyl-[protein] + ATP = O-phospho-L-threonyl-[protein] + ADP + H(+). Component of the EKC/KEOPS complex that is required for the formation of a threonylcarbamoyl group on adenosine at position 37 (t(6)A37) in tRNAs that read codons beginning with adenine. The complex is probably involved in the transfer of the threonylcarbamoyl moiety of threonylcarbamoyl-AMP (TC-AMP) to the N6 group of A37. BUD32 has ATPase activity in the context of the EKC/KEOPS complex and likely plays a supporting role to the catalytic subunit KAE1. The EKC/KEOPS complex also promotes both telomere uncapping and telomere elongation. The complex is required for efficient recruitment of transcriptional coactivators. The protein is EKC/KEOPS complex subunit SPAP27G11.07c of Schizosaccharomyces pombe (strain 972 / ATCC 24843) (Fission yeast).